The primary structure comprises 89 residues: Small ribosomal subunit protein uS15 (89 aa).

It belongs to the universal ribosomal protein uS15 family. Part of the 30S ribosomal subunit. Forms a bridge to the 50S subunit in the 70S ribosome, contacting the 23S rRNA.

One of the primary rRNA binding proteins, it binds directly to 16S rRNA where it helps nucleate assembly of the platform of the 30S subunit by binding and bridging several RNA helices of the 16S rRNA. In terms of biological role, forms an intersubunit bridge (bridge B4) with the 23S rRNA of the 50S subunit in the ribosome. The chain is Small ribosomal subunit protein uS15 from Geobacillus kaustophilus (strain HTA426).